Here is a 126-residue protein sequence, read N- to C-terminus: Protein C10 (126 aa).

Ala-2 carries the N-acetylalanine modification.

This sequence belongs to the UPF0456 family. As to expression, ubiquitously expressed, with higher expression in lung.

It is found in the cytoplasm. In brain, may be required for corpus callosum development. This chain is Protein C10 (Grcc10), found in Mus musculus (Mouse).